The primary structure comprises 700 residues: Elongation factor G 1 (700 aa).

Residues 8-290 enclose the tr-type G domain; sequence ERYRNIGISA…AVIDYLPSPA (283 aa). Residues 17-24, 88-92, and 142-145 each bind GTP; these read AHIDAGKT, DTPGH, and NKMD.

It belongs to the TRAFAC class translation factor GTPase superfamily. Classic translation factor GTPase family. EF-G/EF-2 subfamily.

The protein localises to the cytoplasm. Its function is as follows. Catalyzes the GTP-dependent ribosomal translocation step during translation elongation. During this step, the ribosome changes from the pre-translocational (PRE) to the post-translocational (POST) state as the newly formed A-site-bound peptidyl-tRNA and P-site-bound deacylated tRNA move to the P and E sites, respectively. Catalyzes the coordinated movement of the two tRNA molecules, the mRNA and conformational changes in the ribosome. This chain is Elongation factor G 1, found in Bordetella bronchiseptica (strain ATCC BAA-588 / NCTC 13252 / RB50) (Alcaligenes bronchisepticus).